The primary structure comprises 260 residues: Carbonic anhydrase 3 (260 aa).

A2 is subject to N-acetylalanine. The Alpha-carbonic anhydrase domain maps to K3 to F259. S29, S43, S50, and S55 each carry phosphoserine. Residues K64 to R67 are involved in proton transfer. A Phosphothreonine modification is found at T73. 3 residues coordinate Zn(2+): H94, H96, and H119. Y127 carries the phosphotyrosine modification. Position 176 is a phosphothreonine (T176). S-glutathionyl cysteine is present on residues C182 and C187. Residue T198–T199 participates in substrate binding. At T216 the chain carries Phosphothreonine. S219 carries the phosphoserine modification.

Belongs to the alpha-carbonic anhydrase family. It depends on Zn(2+) as a cofactor. In terms of processing, S-thiolated both by thiol-disulfide exchange with glutathione disulfide and by oxyradical-initiated S-thiolation with reduced glutathione. S-glutathionylated in hepatocytes under oxidative stress.

Its subcellular location is the cytoplasm. The catalysed reaction is hydrogencarbonate + H(+) = CO2 + H2O. With respect to regulation, inhibited by acetazolamide. Functionally, reversible hydration of carbon dioxide. The chain is Carbonic anhydrase 3 from Sus scrofa (Pig).